The sequence spans 83 residues: Large ribosomal subunit protein bL27c (83 aa).

A disordered region spans residues 1-24 (MAHKKGAGSTKNGRDSNAKRLGVK).

The protein belongs to the bacterial ribosomal protein bL27 family.

It localises to the plastid. It is found in the chloroplast. In Trieres chinensis (Marine centric diatom), this protein is Large ribosomal subunit protein bL27c (rpl27).